The primary structure comprises 91 residues: UPF0250 protein Psyr_4360 (91 aa).

Belongs to the UPF0250 family.

The protein is UPF0250 protein Psyr_4360 of Pseudomonas syringae pv. syringae (strain B728a).